The following is a 488-amino-acid chain: Protein nucleotidyltransferase YdiU (488 aa).

8 residues coordinate ATP: Gly91, Gly93, Arg94, Lys114, Asp126, Gly127, Arg177, and Arg184. Asp253 (proton acceptor) is an active-site residue. Mg(2+) is bound by residues Asn254 and Asp263. Asp263 serves as a coordination point for ATP.

The protein belongs to the SELO family. Requires Mg(2+) as cofactor. Mn(2+) is required as a cofactor.

The catalysed reaction is L-seryl-[protein] + ATP = 3-O-(5'-adenylyl)-L-seryl-[protein] + diphosphate. The enzyme catalyses L-threonyl-[protein] + ATP = 3-O-(5'-adenylyl)-L-threonyl-[protein] + diphosphate. It carries out the reaction L-tyrosyl-[protein] + ATP = O-(5'-adenylyl)-L-tyrosyl-[protein] + diphosphate. It catalyses the reaction L-histidyl-[protein] + UTP = N(tele)-(5'-uridylyl)-L-histidyl-[protein] + diphosphate. The catalysed reaction is L-seryl-[protein] + UTP = O-(5'-uridylyl)-L-seryl-[protein] + diphosphate. The enzyme catalyses L-tyrosyl-[protein] + UTP = O-(5'-uridylyl)-L-tyrosyl-[protein] + diphosphate. In terms of biological role, nucleotidyltransferase involved in the post-translational modification of proteins. It can catalyze the addition of adenosine monophosphate (AMP) or uridine monophosphate (UMP) to a protein, resulting in modifications known as AMPylation and UMPylation. The polypeptide is Protein nucleotidyltransferase YdiU (Bacillus cereus (strain ATCC 10987 / NRS 248)).